We begin with the raw amino-acid sequence, 454 residues long: Apyrase (454 aa).

At 1–7 (MLNQNSH) the chain is on the cytoplasmic side. Residues 8-28 (FIFIILAIFLVLPLSLLSKNV) traverse the membrane as a helical; Signal-anchor for type II membrane protein segment. The Extracellular portion of the chain corresponds to 29 to 454 (NAQIPLRRHL…TTNKIRVASS (426 aa)). Residue 48-58 (VIFDAGSTGSR) participates in ATP binding. An N-linked (GlcNAc...) asparagine glycan is attached at N151. Residue E170 is the Proton acceptor of the active site. 194–204 (ATIDLGGGSVQ) is a binding site for ATP. N262 is a glycosylation site (N-linked (GlcNAc...) asparagine).

The protein belongs to the GDA1/CD39 NTPase family. Ca(2+) is required as a cofactor. The N-terminus is blocked.

It is found in the membrane. It carries out the reaction a ribonucleoside 5'-triphosphate + 2 H2O = a ribonucleoside 5'-phosphate + 2 phosphate + 2 H(+). Its function is as follows. Catalyzes the hydrolysis of phosphoanhydride bonds of nucleoside tri- and di-phosphates. This is Apyrase (RROP1) from Solanum tuberosum (Potato).